The primary structure comprises 417 residues: Peptidyl-Asp metalloendopeptidase (417 aa).

A signal peptide spans 1–23; that stretch reads MKSKSMCTTVGLIAMCLAGSAAA. His-331 is a binding site for Zn(2+). Glu-332 is an active-site residue. 2 residues coordinate Zn(2+): His-335 and His-341.

The protein belongs to the peptidase M72 family. It depends on Zn(2+) as a cofactor.

The catalysed reaction is Cleavage of Xaa-|-Asp, Xaa-|-Glu and Xaa-|-cysteic acid bonds.. In terms of biological role, metalloprotease, specifically cleaves on the N-terminal side of aspartyl, glutamyl and cysteic acid residues. The polypeptide is Peptidyl-Asp metalloendopeptidase (Xanthomonas campestris pv. campestris (strain ATCC 33913 / DSM 3586 / NCPPB 528 / LMG 568 / P 25)).